The following is a 480-amino-acid chain: MQLKDAQLFRQQAYINGEWLDADNGQTIKVTNPATGEVIGTVPKMGTAETRRAIEAADKALPAWRALTAKERSAKLRRWFELMIENQDDLARLMTTEQGKPLAEAKGEIAYAASFIEWFAEEAKRIYGDTIPGHQPDKRLIVIKQPIGVTAAITPWNFPAAMITRKAGPALAAGCTMVLKPASQTPYSALALVELAHRAGIPAGVLSVVTGSAGEVGGELTGNSLVRKLSFTGSTEIGRQLMEECAKDIKKVSLELGGNAPFIVFDDADLDKAVEGAIISKYRNNGQTCVCANRIYVQDGVYDAFAEKLAAAVAKLKIGNGLEEGTTTGPLIDGKAVAKVQEHIEDAVSKGAKVLSGGKLIEGNFFEPTILVDVPKTAAVAKEETFGPLAPLFRFKDEAEVIAMSNDTEFGLASYFYARDMSRVFRVAEALEYGMVGINTGLISNEVAPFGGIKASGLGREGSKYGIEDYLEIKYLCISV.

NADP(+) contacts are provided by residues 156-157 (WN), 180-183 (KPAS), and 233-234 (GS). The Proton acceptor role is filled by Glu-255. Residue Leu-256 participates in NADP(+) binding. The active-site Nucleophile is Cys-289. Glu-384 contributes to the NADP(+) binding site.

It belongs to the aldehyde dehydrogenase family.

It catalyses the reaction 5-oxopentanoate + NADP(+) + H2O = glutarate + NADPH + 2 H(+). Its pathway is amino-acid degradation. In terms of biological role, catalyzes the conversion of 5-oxopentanoate (glutarate semialdehyde) to glutarate. Involved in L-lysine degradation. The polypeptide is Glutarate-semialdehyde dehydrogenase (Pseudomonas putida (strain ATCC 47054 / DSM 6125 / CFBP 8728 / NCIMB 11950 / KT2440)).